Reading from the N-terminus, the 895-residue chain is Splicing factor 3B subunit 2 (895 aa).

The span at 1-10 (MATEHPEPPK) shows a compositional bias: basic and acidic residues. Disordered stretches follow at residues 1-24 (MATE…PGHY), 65-136 (LNRP…LRVG), 197-373 (AKMG…EYVT), and 400-453 (KKEK…SKKK). K10 participates in a covalent cross-link: Glycyl lysine isopeptide (Lys-Gly) (interchain with G-Cter in SUMO2). In terms of domain architecture, SAP spans 24 to 58 (YGAWAAQELQAKLAEIGAPIQGNREELVERLQSYT). Pro residues-rich tracts occupy residues 90–114 (IPMP…PPPG) and 122–133 (AHPPNLGPPPPL). Positions 140 to 199 (ALSEEERLKLAQQQAALLMQQEERAKQQGDHSLKEHELLEQQKRAAVLLEQERQQEIAKM) form a coiled coil. The span at 218–238 (PLGPRVAAPVGPVGPTPTVLP) shows a compositional bias: low complexity. An omega-N-methylarginine mark is found at R222, R245, and R247. Over residues 241-254 (APVPRPRGPPPPPG) the composition is skewed to pro residues. The residue at position 275 (K275) is an N6-acetyllysine. The span at 277–286 (LQLKESRQEE) shows a compositional bias: basic and acidic residues. K280 participates in a covalent cross-link: Glycyl lysine isopeptide (Lys-Gly) (interchain with G-Cter in SUMO2). The residue at position 289 (S289) is a Phosphoserine. The residue at position 298 (T298) is a Phosphothreonine. Phosphoserine occurs at positions 307 and 309. T311 is subject to Phosphothreonine. At S317 the chain carries Phosphoserine. Residues 322-338 (EKNRKRRNRKKKKKPQR) show a composition bias toward basic residues. Basic and acidic residues predominate over residues 347 to 359 (SGDREKDSTRSRG). Residues S360 and S362 each carry the phosphoserine modification. Residues K400 and K412 each participate in a glycyl lysine isopeptide (Lys-Gly) (interchain with G-Cter in SUMO2) cross-link. Composition is skewed to basic and acidic residues over residues 400 to 414 (KKEK…DKLE) and 422 to 431 (KGFEEEHKDS). The segment at 401-550 (KEKEKEPEKL…QEKEEQKTMK (150 aa)) is required for interaction with PRMT9. Phosphoserine occurs at positions 431, 435, and 436. K492 is covalently cross-linked (Glycyl lysine isopeptide (Lys-Gly) (interchain with G-Cter in SUMO2)). The residue at position 508 (R508) is an Omega-N-methylarginine; by PRMT9; alternate. R508 is modified (symmetric dimethylarginine; by PRMT9; alternate). Residue R515 is modified to Omega-N-methylarginine. A Glycyl lysine isopeptide (Lys-Gly) (interchain with G-Cter in SUMO2) cross-link involves residue K543. Residues 691–757 (AAEFQTKTEE…PGGFSSVPAG (67 aa)) are disordered. The segment covering 712–732 (EPSDEESSEEEEEEESDEDKP) has biased composition (acidic residues). K770 participates in a covalent cross-link: Glycyl lysine isopeptide (Lys-Gly) (interchain with G-Cter in SUMO2). At T780 the chain carries Phosphothreonine. Residues K790, K843, and K857 each participate in a glycyl lysine isopeptide (Lys-Gly) (interchain with G-Cter in SUMO2) cross-link. Residues 844–869 (YEEHVREQQAQVEKEDFSDMVAEHAA) show a composition bias toward basic and acidic residues. Residues 844 to 895 (YEEHVREQQAQVEKEDFSDMVAEHAAKQKQKKRKAQPQDSRGGSKKYKEFKF) are disordered. S861 carries the phosphoserine modification.

In terms of assembly, component of the 17S U2 SnRNP complex, a ribonucleoprotein complex that contains small nuclear RNA (snRNA) U2 and a number of specific proteins. Part of the SF3B subcomplex of the 17S U2 SnRNP complex. SF3B associates with the splicing subcomplex SF3A and a 12S RNA unit to form the U2 small nuclear ribonucleoproteins complex (U2 snRNP). Within the SF3B complex, interacts directly with SF3B4. Found in a complex with PRMT9, SF3B2 and SF3B4. Interacts (Arg-508-methylated form) with SMN1 (via Tudor domain). Interacts with RBM7. Interacts with ERCC6. Component of the minor spliceosome. Within this complex, interacts with SCNM1 and CRIPT. (Microbial infection) Interacts with HIV-1 Vpr. Post-translationally, methylation at Arg-508 by PRMT9 is required for the interaction with SMN1.

Its subcellular location is the nucleus. The protein resides in the nucleus speckle. Functionally, component of the 17S U2 SnRNP complex of the spliceosome, a large ribonucleoprotein complex that removes introns from transcribed pre-mRNAs. The 17S U2 SnRNP complex (1) directly participates in early spliceosome assembly and (2) mediates recognition of the intron branch site during pre-mRNA splicing by promoting the selection of the pre-mRNA branch-site adenosine, the nucleophile for the first step of splicing. Within the 17S U2 SnRNP complex, SF3B2 is part of the SF3B subcomplex, which is required for 'A' complex assembly formed by the stable binding of U2 snRNP to the branchpoint sequence in pre-mRNA. Sequence independent binding of SF3A and SF3B subcomplexes upstream of the branch site is essential, it may anchor U2 snRNP to the pre-mRNA. May also be involved in the assembly of the 'E' complex. Also acts as a component of the minor spliceosome, which is involved in the splicing of U12-type introns in pre-mRNAs. The chain is Splicing factor 3B subunit 2 (SF3B2) from Homo sapiens (Human).